Here is a 285-residue protein sequence, read N- to C-terminus: Type II secretion system protein C (285 aa).

At 1–27 (MSKGIKMHNSVMRLTIPNKKIINYAPH) the chain is on the cytoplasmic side. A helical transmembrane segment spans residues 28-46 (IVTSIILFFICQQLAQLTW). The Periplasmic portion of the chain corresponds to 47 to 285 (KIILPVNFTD…NDIYLALRDE (239 aa)).

This sequence belongs to the GSP C family.

Its subcellular location is the cell inner membrane. Involved in a type II secretion system (T2SS, formerly general secretion pathway, GSP) for the export of proteins. Required for the translocation of pullulanase. In Klebsiella pneumoniae, this protein is Type II secretion system protein C (pulC).